The primary structure comprises 1206 residues: uncharacterized protein (1206 aa).

3 disordered regions span residues 133–547 (YDLD…PVDY), 568–837 (FASS…DQLL), and 859–1206 (RQRA…KATS). Composition is skewed to pro residues over residues 139–151 (IPPP…PGPP) and 159–234 (GESP…PPAP). Ser-255 carries the post-translational modification Phosphoserine. Low complexity predominate over residues 305–319 (VRTSSIPVQEAPGAS). The segment covering 351 to 363 (RALEPEQPREPRP) has biased composition (basic and acidic residues). A compositionally biased stretch (pro residues) spans 384–413 (APPPAPPLPPPAPPLPPPAPSLPPAAPPLP). Residues 414–436 (STELAAPPSSGFMKTSKSNSPAL) show a composition bias toward low complexity. Over residues 454–467 (VDWRDPRQMEKLRS) the composition is skewed to basic and acidic residues. The segment covering 522-531 (PEKSPSSSSL) has biased composition (low complexity). Basic and acidic residues predominate over residues 568–577 (FASSAEKEAK). Low complexity predominate over residues 656-671 (LPKATPGLTLPLKPTP). Thr-680 is subject to Phosphothreonine. Residues 732 to 747 (AEKDLASVRQREKPET) are compositionally biased toward basic and acidic residues. The span at 1001 to 1016 (IPPPPEFSNDPEPPAP) shows a compositional bias: pro residues. The span at 1028-1041 (PRNNFSDLGQSWGP) shows a compositional bias: polar residues. Arg-1051, Arg-1083, and Arg-1094 each carry omega-N-methylarginine. Polar residues predominate over residues 1170 to 1184 (PHGNTHYGSPINTFT).

This is an uncharacterized protein from Mus musculus (Mouse).